A 118-amino-acid chain; its full sequence is Vesicle-associated membrane protein 1 (118 aa).

Positions 1–15 (MSAPAQPPAEGTEGA) are enriched in low complexity. The interval 1–36 (MSAPAQPPAEGTEGAAPGGGPPGPPPNMTSNRRLQQ) is disordered. At 1-96 (MSAPAQPPAE…KRKYWWKNCK (96 aa)) the chain is on the cytoplasmic side. One can recognise a v-SNARE coiled-coil homology domain in the interval 33–93 (RLQQTQAQVE…AKLKRKYWWK (61 aa)). S63 bears the Phosphoserine mark. The chain crosses the membrane as a helical; Anchor for type IV membrane protein span at residues 97-116 (MMIMLGAICAIIVVVIVIYF). At 117–118 (FT) the chain is on the vesicular side.

Belongs to the synaptobrevin family. Interacts with VAPA and VAPB. (Microbial infection) Targeted and hydrolyzed by C.botulinum neurotoxin type X (BoNT/X) which hydrolyzes the 68-Arg-|-Ala-69 bond and probably inhibits neurotransmitter release. It remains unknown whether BoNT/X is ever produced, or what organisms it targets. As to expression, highly expressed in the zona incerta and rostral periolivary region of the brain. Other neuroanatomical regions show negligible expression. Expressed in the retina, expression observed in the outer segments of the photoreceptors, in the outer and inner plexiform layers, and in a subset of ganglion cells.

It localises to the cytoplasmic vesicle. The protein resides in the secretory vesicle. The protein localises to the synaptic vesicle membrane. It is found in the synapse. Its subcellular location is the synaptosome. It localises to the cytoplasmic vesicle membrane. Involved in the targeting and/or fusion of transport vesicles to their target membrane. The polypeptide is Vesicle-associated membrane protein 1 (Vamp1) (Mus musculus (Mouse)).